Reading from the N-terminus, the 330-residue chain is Phosphate acyltransferase (330 aa).

The protein belongs to the PlsX family. As to quaternary structure, homodimer. Probably interacts with PlsY.

It localises to the cytoplasm. It carries out the reaction a fatty acyl-[ACP] + phosphate = an acyl phosphate + holo-[ACP]. It participates in lipid metabolism; phospholipid metabolism. Its function is as follows. Catalyzes the reversible formation of acyl-phosphate (acyl-PO(4)) from acyl-[acyl-carrier-protein] (acyl-ACP). This enzyme utilizes acyl-ACP as fatty acyl donor, but not acyl-CoA. The chain is Phosphate acyltransferase from Streptococcus pneumoniae (strain JJA).